The chain runs to 479 residues: Beta-monoglucosyldiacylglycerol synthase (479 aa).

4 consecutive transmembrane segments (helical) span residues 48–68 (AAVM…WVWG), 363–383 (FLLM…MALW), 389–409 (LLTP…YYGL), and 428–448 (LART…MPAV).

This sequence belongs to the glycosyltransferase 2 family. Requires Mg(2+) as cofactor.

It is found in the membrane. The enzyme catalyses a 1,2-diacyl-sn-glycerol + UDP-alpha-D-glucose = a 1,2-diacyl-3-O-(beta-D-glucopyranosyl)-sn-glycerol + UDP + H(+). In terms of biological role, glucosyltransferase involved in the biosynthesis of the non-bilayer-forming membrane lipid beta-monoglucosyldiacylglycerol which contributes to regulate the properties and stability of the membrane. Catalyzes the transfer of a glucosyl residue from UDP-Glc to diacylglycerol (DAG) acceptor to form the corresponding beta-glucosyl-DAG (1,2-diacyl-3-O-(beta-D-glucopyranosyl)-sn-glycerol). It can only use UDP-Glc as sugar donor. Two types of DAG (dipalmitoyl-DAG (DPDAG) and 1-oleoyl-2-palmitoyl-DAG (OPDAG)) can be used as sugar acceptors, but OPDAG is preferred. The protein is Beta-monoglucosyldiacylglycerol synthase of Synechocystis sp. (strain ATCC 27184 / PCC 6803 / Kazusa).